A 1442-amino-acid polypeptide reads, in one-letter code: Clustered mitochondria protein homolog (1442 aa).

2 disordered regions span residues 38-100 (NYRN…KKPD) and 237-258 (GRSE…KDRP). A compositionally biased stretch (basic and acidic residues) spans 82-100 (SEGEQQKDKTAAEDKKKPD). Residues 394–636 (RAEDTFSSKL…RTFPPDVNFL (243 aa)) form the Clu domain. Composition is skewed to basic and acidic residues over residues 696 to 714 (QKQE…EPKA) and 737 to 763 (ESKE…KVET). Disordered regions lie at residues 696-763 (QKQE…KVET) and 949-984 (SESD…SFQC). Polar residues predominate over residues 949-958 (SESDALTKSG). TPR repeat units follow at residues 1087 to 1120 (AYNF…LNNV), 1213 to 1246 (ALLD…NIKY), and 1248 to 1281 (GEKS…EKET). The interval 1373 to 1442 (RQKEGGTSEQ…SSNASAQQVS (70 aa)) is disordered. Low complexity predominate over residues 1380 to 1390 (SEQAAAAQASQ). The span at 1424 to 1442 (ASSSKQADNSSNASAQQVS) shows a compositional bias: polar residues.

It belongs to the CLU family.

It localises to the cytoplasm. In terms of biological role, mRNA-binding protein involved in proper cytoplasmic distribution of mitochondria. The polypeptide is Clustered mitochondria protein homolog (Aedes aegypti (Yellowfever mosquito)).